The primary structure comprises 336 residues: UPF0104 membrane protein MJ1595 (336 aa).

A run of 9 helical transmembrane segments spans residues 9-29 (STILLIISFLFILAIMAYIGL), 40-60 (NPEYVILAFILQILVSVILSA), 68-88 (ILGYSANFKNIFLLVLMGLFI), 127-147 (VLDTAIFLFFTLFVIGYFVVT), 154-174 (YLILSWIFLFSLTAIIIYLIA), 223-243 (WEVVVAIFLSVMRYIFDILKL), 245-265 (LLFLSLSYVVSVICVSAVYLI), 285-305 (VMILSFSAFNIPPSVAAAVTL), and 306-326 (LDRLVSYILPTILGYIAMLII).

This sequence belongs to the UPF0104 family.

Its subcellular location is the cell membrane. The sequence is that of UPF0104 membrane protein MJ1595 from Methanocaldococcus jannaschii (strain ATCC 43067 / DSM 2661 / JAL-1 / JCM 10045 / NBRC 100440) (Methanococcus jannaschii).